Consider the following 156-residue polypeptide: 6,7-dimethyl-8-ribityllumazine synthase (156 aa).

Residues Phe22, Ala57 to Glu59, and Thr81 to Ile83 contribute to the 5-amino-6-(D-ribitylamino)uracil site. Position 86-87 (Gly86–Thr87) interacts with (2S)-2-hydroxy-3-oxobutyl phosphate. The active-site Proton donor is His89. Position 114 (Phe114) interacts with 5-amino-6-(D-ribitylamino)uracil. Arg128 contacts (2S)-2-hydroxy-3-oxobutyl phosphate.

Belongs to the DMRL synthase family. In terms of assembly, forms an icosahedral capsid composed of 60 subunits, arranged as a dodecamer of pentamers.

It catalyses the reaction (2S)-2-hydroxy-3-oxobutyl phosphate + 5-amino-6-(D-ribitylamino)uracil = 6,7-dimethyl-8-(1-D-ribityl)lumazine + phosphate + 2 H2O + H(+). It functions in the pathway cofactor biosynthesis; riboflavin biosynthesis; riboflavin from 2-hydroxy-3-oxobutyl phosphate and 5-amino-6-(D-ribitylamino)uracil: step 1/2. Its function is as follows. Catalyzes the formation of 6,7-dimethyl-8-ribityllumazine by condensation of 5-amino-6-(D-ribitylamino)uracil with 3,4-dihydroxy-2-butanone 4-phosphate. This is the penultimate step in the biosynthesis of riboflavin. This Yersinia pseudotuberculosis serotype O:1b (strain IP 31758) protein is 6,7-dimethyl-8-ribityllumazine synthase.